Here is a 197-residue protein sequence, read N- to C-terminus: MAVSPKINRREHILQCLAQMLETNPGQRITTAKLASEVGVSEAALYRHFPSKARMFEGLIEFIEESLLSRINLIMDDEKDTMKRCQLVLQLLLIFAERNPGISRVLNGDALLGENERLRSRISNLFAKIETQLKQILREKTLREGKGFNLDEAILANLLLAFAEGRIAQFVRSEFKLKPTTHFDEQWRFIQHQLLQS.

An HTH tetR-type domain is found at 7–67; that stretch reads INRREHILQC…GLIEFIEESL (61 aa). A DNA-binding region (H-T-H motif) is located at residues 30–49; that stretch reads TTAKLASEVGVSEAALYRHF. Residues 109–136 are a coiled coil; the sequence is DALLGENERLRSRISNLFAKIETQLKQI.

The protein belongs to the nucleoid occlusion factor SlmA family. Homodimer. Interacts with FtsZ.

It is found in the cytoplasm. It localises to the nucleoid. Required for nucleoid occlusion (NO) phenomenon, which prevents Z-ring formation and cell division over the nucleoid. Acts as a DNA-associated cell division inhibitor that binds simultaneously chromosomal DNA and FtsZ, and disrupts the assembly of FtsZ polymers. SlmA-DNA-binding sequences (SBS) are dispersed on non-Ter regions of the chromosome, preventing FtsZ polymerization at these regions. This chain is Nucleoid occlusion factor SlmA, found in Shewanella baltica (strain OS223).